Here is a 73-residue protein sequence, read N- to C-terminus: Putative defensin-like protein 277 (73 aa).

The N-terminal stretch at 1-24 (MSAQKIYLASLLLFICLVFPQSTA) is a signal peptide. Intrachain disulfides connect C27–C64, C33–C52, C39–C62, and C43–C63.

Belongs to the DEFL family.

It is found in the secreted. In Arabidopsis thaliana (Mouse-ear cress), this protein is Putative defensin-like protein 277.